The primary structure comprises 274 residues: Syntaxin-12 (274 aa).

Disordered regions lie at residues 1-20 and 128-147; these read MSYG…PQPR and EKES…EDRQ. S2 bears the N-acetylserine mark. Residues 2–250 lie on the Cytoplasmic side of the membrane; it reads SYGPLDMYRN…AYYQKKSRKK (249 aa). The stretch at 33–130 forms a coiled coil; sequence IQRISQATAQ…QRKVSEKEKE (98 aa). 4 positions are modified to phosphoserine: S139, S142, S218, and S225. Positions 178–240 constitute a t-SNARE coiled-coil homology domain; that stretch reads LELIKERETA…ERATDQLQRA (63 aa). Residues 251 to 271 form a helical; Anchor for type IV membrane protein membrane-spanning segment; that stretch reads MCILVLVLSVIVTVLVVVIWV. Residues 272 to 274 are Vesicular-facing; that stretch reads ASK.

This sequence belongs to the syntaxin family. In terms of assembly, associates with the BLOC-1 complex. Interacts with BLOC1S6. Interacts with NAPA and SNAP23. Identified in a complex containing STX6, STX12, VAMP4 and VTI1A. Interacts with GRIPAP1. Forms a complex with GRIP1, GRIA2 and NSG1; controls the intracellular fate of AMPAR and the endosomal sorting of the GRIA2 subunit toward recycling and membrane targeting. Interacts with NSG1. Interacts with TPC1. Interacts (via N-terminus) with VPS13B.

The protein resides in the endosome membrane. It localises to the golgi apparatus membrane. The protein localises to the endomembrane system. It is found in the early endosome membrane. Its subcellular location is the recycling endosome membrane. Its function is as follows. SNARE promoting fusion of transport vesicles with target membranes. Together with SNARE STX6, promotes movement of vesicles from endosomes to the cell membrane, and may therefore function in the endocytic recycling pathway. Through complex formation with GRIP1, GRIA2 and NSG1 controls the intracellular fate of AMPAR and the endosomal sorting of the GRIA2 subunit toward recycling and membrane targeting. In Mus musculus (Mouse), this protein is Syntaxin-12 (Stx12).